The chain runs to 201 residues: Recombination protein RecR (201 aa).

The segment at 59–74 (CKICGNIDTENICRIC) adopts a C4-type zinc-finger fold. The Toprim domain occupies 82–177 (SIIAIVETVA…KISRLASGIP (96 aa)).

The protein belongs to the RecR family.

Its function is as follows. May play a role in DNA repair. It seems to be involved in an RecBC-independent recombinational process of DNA repair. It may act with RecF and RecO. In Rickettsia massiliae (strain Mtu5), this protein is Recombination protein RecR.